An 88-amino-acid polypeptide reads, in one-letter code: DNA-directed RNA polymerase subunit omega (88 aa).

The protein belongs to the RNA polymerase subunit omega family. The RNAP catalytic core consists of 2 alpha, 1 beta, 1 beta' and 1 omega subunit. When a sigma factor is associated with the core the holoenzyme is formed, which can initiate transcription.

It catalyses the reaction RNA(n) + a ribonucleoside 5'-triphosphate = RNA(n+1) + diphosphate. Functionally, promotes RNA polymerase assembly. Latches the N- and C-terminal regions of the beta' subunit thereby facilitating its interaction with the beta and alpha subunits. The polypeptide is DNA-directed RNA polymerase subunit omega (Kineococcus radiotolerans (strain ATCC BAA-149 / DSM 14245 / SRS30216)).